The primary structure comprises 2016 residues: Cell adhesion molecule Dscam1 (2016 aa).

Positions 1 to 28 (MNMPNERLKWLMLFAAVALIACGSQTLA) are cleaved as a signal peptide. Residues 29–1618 (ANPPDADQKG…TIRIILSNLN (1590 aa)) lie on the Extracellular side of the membrane. Ig-like C2-type domains follow at residues 39–134 (PVFL…VHVR), 138–230 (AQYY…TRLS), 247–338 (PKIN…TVLT), 342–421 (PLSA…AELK), 428–522 (PPVI…AKLN), 527–613 (PYIR…LEVQ), 618–712 (PQVL…LQVN), 715–807 (PRWI…IMIS), and 812–904 (PEFT…ASIN). N-linked (GlcNAc...) asparagine glycosylation is present at asparagine 53. Cysteine 61 and cysteine 117 are oxidised to a cystine. Residues aspartate 144, asparagine 146, and leucine 161 each coordinate Zn(2+). 13 disulfides stabilise this stretch: cysteine 160/cysteine 217, cysteine 160/threonine 219, cysteine 160/lysine 220, cysteine 269/cysteine 322, proline 270/valine 323, alanine 276/glycine 329, cysteine 364/cysteine 405, cysteine 450/cysteine 506, cysteine 547/cysteine 596, cysteine 640/cysteine 694, valine 641/cysteine 694, valine 641/isoleucine 695, and cysteine 736/cysteine 790. An N-linked (GlcNAc...) asparagine glycan is attached at asparagine 325. N-linked (GlcNAc...) asparagine glycans are attached at residues asparagine 492 and asparagine 577. A glycan (N-linked (GlcNAc...) asparagine) is linked at asparagine 820. The cysteines at positions 833 and 890 are disulfide-linked. Fibronectin type-III domains lie at 913–1007 (MPYA…TAEE), 1012–1116 (KPQN…TPSQ), 1117–1213 (PPSD…TEPD), and 1217–1310 (APTD…PSDQ). N-linked (GlcNAc...) asparagine glycosylation is found at asparagine 1022, asparagine 1055, and asparagine 1186. The Ig-like C2-type 10 domain maps to 1312–1394 (PAKIASFDDT…ENSIAKDSIT (83 aa)). A disulfide bond links cysteine 1334 and cysteine 1382. Fibronectin type-III domains are found at residues 1402 to 1495 (PPQS…TKGQ) and 1499 to 1594 (LPEK…TGGT). A helical transmembrane segment spans residues 1619-1639 (LVVPVVAALLVIIIAIIVICI). The Cytoplasmic portion of the chain corresponds to 1640-2016 (LRSKGNHHKD…GFTAYDTMAV (377 aa)). Positions 1685 to 1688 (PPVP) match the PXXP motif 1; SH3-binding motif. Residues 1688–1719 (PGSNYNTCDRIKRGRGGLRSNHSTWDPRRNPN) are disordered. The PXXP motif 2; SH3-binding signature appears at 1727–1730 (PPVP). 2 disordered regions span residues 1787–1846 (GHAG…DDPA) and 1862–2016 (SQGG…TMAV). Over residues 1826-1836 (KNSQGGQSSIY) the composition is skewed to polar residues. The YXXP motif 1; potential SH2-binding motif lies at 1842 to 1845 (YDDP). Residues 1875–1878 (YDDP) carry the YXXP motif 2; potential SH2-binding motif. Residues 1897–1918 (GQPYDHYGSRGSMGRRSIGSAR) are compositionally biased toward low complexity. The Polyproline tract (probable SH3-binding) motif lies at 1925 to 1932 (PEPPPPPP). Composition is skewed to basic and acidic residues over residues 1944 to 1962 (DSKE…DHGP) and 1974 to 1993 (QPKD…RNET). Positions 1994–2004 (GPKQLQLQQAN) are enriched in polar residues.

Homodimer (via extracellular region); alternative splicing produces a potential 19,008 different ectodomains and the majority of these show strong isoform-specific homodimerization. Interacts (via cytoplasmic domain) with dock/dreadlocks (via SH2 and SH3 domains); the interaction is direct and may require Dscam1 to be phosphorylated. Phosphorylated on tyrosine residues in the intracellular domain. Tyrosine protein kinase Src42A and possibly Src64B are involved in this phosphorylation. In terms of processing, glycosylation on Asn-53 and Asn-325 is involved in stabilizing dimerization. Post-translationally, proteolytically processed, probably to generate a secreted form. Secreted into the hemolymph (at protein level). Expressed in brain and eye-antennal imaginal disks, including R3/R4 and R7 photoreceptor cells. Individual R3/R4 cells express between 14 and 50 randomly generated mRNAs encoding distinct isoforms.

It is found in the cell membrane. The protein localises to the cell projection. The protein resides in the neuron projection. Its subcellular location is the axon. It localises to the perikaryon. It is found in the dendrite. The protein localises to the secreted. Cell surface receptor involved in guidance and targeting of growing nerve axons. Required during Bolwig's organ differentiation for accurate and efficient targeting of photoreceptor neuron axons to their synaptic targets in the brain via the P2 intermediate target neuron. Involved in isoneural self-avoidance during dendrite arborization but not in heteroneural recognition and repulsion during tiling by related neurons of the same class. Involved in regulating axon bifurcation and divergent extension in the developing mushroom body. Essential for axon arborisation in ellipsoid body. Exhibits an extraordinary level of molecular diversity resulting from alternative splicing. Isoforms differing in their ectodomain makeup show a high degree of functional redundancy while isoforms with different transmembrane domains are involved in different neuronal morphogenetic processes and are differentially targeted to dendrites or axons. The vast majority of isoforms exhibit strong isoform-specific homophilic binding. Individual cells express a distinct randomly generated repertoire of isoforms. Cell surfaces bearing identical repertoires of Dscam1 isoforms, such as those from the same cell, trigger recognition and avoidance. A subset of isoforms is expressed in fat body cells and hemocytes, cells that are part of the insect immune response, and these isoforms are secreted into the hemolymph. The secreted form comprising the ectodomain can bind to bacteria, such as Escherichia coli, and may act as an opsonin enhancing their phagocytosis by hemocytes. The polypeptide is Cell adhesion molecule Dscam1 (Drosophila melanogaster (Fruit fly)).